The sequence spans 465 residues: Probable tRNA modification GTPase MnmE (465 aa).

Residues Arg23, Glu85, and Arg124 each contribute to the (6S)-5-formyl-5,6,7,8-tetrahydrofolate site. Residues 221–384 (GTKVCIIGKP…LNNCILDLSS (164 aa)) form the TrmE-type G domain. GTP contacts are provided by residues 231-236 (NVGKSS), 250-256 (TNFPGTT), and 275-278 (DTAG). Positions 235 and 256 each coordinate Mg(2+). Lys465 lines the (6S)-5-formyl-5,6,7,8-tetrahydrofolate pocket.

This sequence belongs to the TRAFAC class TrmE-Era-EngA-EngB-Septin-like GTPase superfamily. TrmE GTPase family. It depends on K(+) as a cofactor.

It is found in the plastid. The protein resides in the chloroplast. Its function is as follows. Exhibits a very high intrinsic GTPase hydrolysis rate. Involved in the addition of a carboxymethylaminomethyl (cmnm) group at the wobble position (U34) of certain tRNAs, forming tRNA-cmnm(5)s(2)U34. This Cyanidium caldarium (Red alga) protein is Probable tRNA modification GTPase MnmE.